Consider the following 141-residue polypeptide: Nucleoside diphosphate kinase (141 aa).

Positions 11, 59, 87, 93, 104, and 114 each coordinate ATP. His117 serves as the catalytic Pros-phosphohistidine intermediate.

Belongs to the NDK family. Homotetramer. Requires Mg(2+) as cofactor.

It localises to the cytoplasm. It catalyses the reaction a 2'-deoxyribonucleoside 5'-diphosphate + ATP = a 2'-deoxyribonucleoside 5'-triphosphate + ADP. The enzyme catalyses a ribonucleoside 5'-diphosphate + ATP = a ribonucleoside 5'-triphosphate + ADP. Its function is as follows. Major role in the synthesis of nucleoside triphosphates other than ATP. The ATP gamma phosphate is transferred to the NDP beta phosphate via a ping-pong mechanism, using a phosphorylated active-site intermediate. This Laribacter hongkongensis (strain HLHK9) protein is Nucleoside diphosphate kinase.